A 389-amino-acid polypeptide reads, in one-letter code: Shewanella-like protein phosphatase 1 (389 aa).

The N-terminal 53 residues, 1–53, are a transit peptide targeting the chloroplast; the sequence is MASLYLNSLLPLPPSHPQKLLEPSSSSLLSTSNGNELALKPIVINGDPPTFVS. Mn(2+) is bound by residues Asp-64, His-66, Asp-102, and Asn-137. The Proton donor role is filled by His-138. The Mn(2+) site is built by His-242 and His-314.

This sequence belongs to the metallophosphoesterase superfamily. SLP family. Mn(2+) is required as a cofactor. As to expression, expressed in rosettes leaves, shoots and flowers (at protein level).

It localises to the plastid. Its subcellular location is the chloroplast. In terms of biological role, shows phosphatase activity, hydrolyzing the artificial substrate para-nitrophenylphosphate (pNPP) in vitro. This is Shewanella-like protein phosphatase 1 from Arabidopsis thaliana (Mouse-ear cress).